Reading from the N-terminus, the 260-residue chain is Triosephosphate isomerase (260 aa).

Residue 11 to 13 (NWK) participates in substrate binding. The active-site Electrophile is the His-103. Glu-175 serves as the catalytic Proton acceptor. Substrate is bound by residues Gly-181, Ser-220, and 241 to 242 (GG).

Belongs to the triosephosphate isomerase family. As to quaternary structure, homodimer.

The protein localises to the cytoplasm. It carries out the reaction D-glyceraldehyde 3-phosphate = dihydroxyacetone phosphate. It participates in carbohydrate biosynthesis; gluconeogenesis. The protein operates within carbohydrate degradation; glycolysis; D-glyceraldehyde 3-phosphate from glycerone phosphate: step 1/1. Involved in the gluconeogenesis. Catalyzes stereospecifically the conversion of dihydroxyacetone phosphate (DHAP) to D-glyceraldehyde-3-phosphate (G3P). The protein is Triosephosphate isomerase of Shewanella sediminis (strain HAW-EB3).